Here is a 128-residue protein sequence, read N- to C-terminus: Large ribosomal subunit protein mL51 (128 aa).

A mitochondrion-targeting transit peptide spans 1 to 31; it reads MAGSVPWAASRRLWGWVPSACRSFSLGVPRL.

The protein belongs to the mitochondrion-specific ribosomal protein mL51 family. In terms of assembly, component of the mitochondrial ribosome large subunit (39S) which comprises a 16S rRNA and about 50 distinct proteins. Interacts with OXA1L.

The protein resides in the mitochondrion. The sequence is that of Large ribosomal subunit protein mL51 (Mrpl51) from Mus musculus (Mouse).